The primary structure comprises 309 residues: L-aminoadipate-semialdehyde dehydrogenase-phosphopantetheinyl transferase (309 aa).

CoA is bound by residues arginine 47, 86-91, and 108-111; these read RTAKGK and NISH. Mg(2+) contacts are provided by aspartate 129 and glutamate 181. 181–185 serves as a coordination point for CoA; it reads ESFIK. Serine 258 bears the Phosphoserine mark.

Belongs to the P-Pant transferase superfamily. AcpS family. As to quaternary structure, monomer. Requires Mg(2+) as cofactor.

Its subcellular location is the cytoplasm. The protein resides in the cytosol. The enzyme catalyses apo-[ACP] + CoA = holo-[ACP] + adenosine 3',5'-bisphosphate + H(+). It catalyses the reaction apo-[ACP] + acetyl-CoA = acetyl-[ACP] + adenosine 3',5'-bisphosphate + H(+). Functionally, catalyzes the post-translational modification of target proteins by phosphopantetheine. Can transfer the 4'-phosphopantetheine moiety from coenzyme A, regardless of whether the CoA is presented in the free thiol form or as an acetyl thioester, to a serine residue of a broad range of acceptors including the acyl carrier domain of FASN. In Pongo abelii (Sumatran orangutan), this protein is L-aminoadipate-semialdehyde dehydrogenase-phosphopantetheinyl transferase (AASDHPPT).